A 443-amino-acid polypeptide reads, in one-letter code: Ribosomal protein uS12 methylthiotransferase RimO (443 aa).

Residues M1–P114 enclose the MTTase N-terminal domain. Residues C8, C44, C73, C145, C149, and C152 each coordinate [4Fe-4S] cluster. One can recognise a Radical SAM core domain in the interval L131–R372. The TRAM domain maps to Q375 to V443.

Belongs to the methylthiotransferase family. RimO subfamily. [4Fe-4S] cluster serves as cofactor.

It is found in the cytoplasm. The catalysed reaction is L-aspartate(89)-[ribosomal protein uS12]-hydrogen + (sulfur carrier)-SH + AH2 + 2 S-adenosyl-L-methionine = 3-methylsulfanyl-L-aspartate(89)-[ribosomal protein uS12]-hydrogen + (sulfur carrier)-H + 5'-deoxyadenosine + L-methionine + A + S-adenosyl-L-homocysteine + 2 H(+). Functionally, catalyzes the methylthiolation of an aspartic acid residue of ribosomal protein uS12. The polypeptide is Ribosomal protein uS12 methylthiotransferase RimO (Cupriavidus necator (strain ATCC 17699 / DSM 428 / KCTC 22496 / NCIMB 10442 / H16 / Stanier 337) (Ralstonia eutropha)).